The following is a 74-amino-acid chain: Protein kish-B (74 aa).

The signal sequence occupies residues 1–22 (MTNVYSFDGILVFGLLFICTCA). Residues 23-52 (YLKKVPRLNSWLLSEKKGVWGVFYKAAVIG) lie on the Extracellular side of the membrane. The chain crosses the membrane as a helical span at residues 53–73 (TRLHVVVAASCLCMAFYLIFL). Position 74 (lysine 74) is a topological domain, cytoplasmic.

This sequence belongs to the KISH family.

The protein localises to the golgi apparatus membrane. Involved in the early part of the secretory pathway. This Danio rerio (Zebrafish) protein is Protein kish-B (tmem167b).